We begin with the raw amino-acid sequence, 412 residues long: Alpha-1-antiproteinase (412 aa).

An N-terminal signal peptide occupies residues Met1–Ala24. Ser33 is modified (phosphoserine). Asn65, Asn102, Asn165, and Asn266 each carry an N-linked (GlcNAc...) asparagine glycan. The interval Gly368–Arg387 is RCL. Phosphoserine is present on Ser378.

It belongs to the serpin family. Interacts with CELA2A. Interacts with ERGIC3 and LMAN1/ERGIC53. Interacts with PRSS1/Trypsin. Plasma.

It localises to the secreted. Functionally, inhibitor of serine proteases. This Callosciurus caniceps (Gray-bellied squirrel) protein is Alpha-1-antiproteinase.